Consider the following 328-residue polypeptide: MKPARLMKVFVTGPLPAEGRAALAQAADCEVEQWNSDDPIPRKDLEQGVVGAHGLLCRLSDRVDKKLLDAAGANLRVISTLSVGVDHLALDEIKKRGIRVGYTPGVLTDATAELAVSLLLTTCRRLPEAIEEVKNGGWSSWSPLWMCGYGLSQSTVGIVGLGRIGQAIARRLKPFGVQRFLYTGRQPRPQEAAEFQAEFVPIAQLAAESDFIVVSCSLTPDTMGLCSKDFFQKMKNTAIFINISRGDVVNQEDLYQALASGQIAAAGLDVTTPEPLPPSHPLLTLKNCVILPHIGSATYKTRNTMSLLAANNLLAGLRGEAMPSELKL.

Residue S36 is modified to Phosphoserine. 83 to 84 is a binding site for substrate; it reads VG. Residues 162–164, 185–188, S217, and I243 each bind NADP(+); these read GRI and RQPR. Substrate contacts are provided by residues R245, D269, and 293 to 296; that span reads HIGS. The active-site Proton donor is H293. G295 is an NADP(+) binding site. T298 is modified (phosphothreonine).

This sequence belongs to the D-isomer specific 2-hydroxyacid dehydrogenase family. As to quaternary structure, homodimer.

The catalysed reaction is glycolate + NADP(+) = glyoxylate + NADPH + H(+). The enzyme catalyses (R)-glycerate + NAD(+) = 3-hydroxypyruvate + NADH + H(+). It carries out the reaction (R)-glycerate + NADP(+) = 3-hydroxypyruvate + NADPH + H(+). Its function is as follows. Enzyme with hydroxy-pyruvate reductase, glyoxylate reductase and D-glycerate dehydrogenase enzymatic activities. Reduces hydroxypyruvate to D-glycerate, glyoxylate to glycolate oxidizes D-glycerate to hydroxypyruvate. The chain is Glyoxylate reductase/hydroxypyruvate reductase (Grhpr) from Mus musculus (Mouse).